We begin with the raw amino-acid sequence, 473 residues long: Aspartyl/glutamyl-tRNA(Asn/Gln) amidotransferase subunit B (473 aa).

The protein belongs to the GatB/GatE family. GatB subfamily. Heterotrimer of A, B and C subunits.

The enzyme catalyses L-glutamyl-tRNA(Gln) + L-glutamine + ATP + H2O = L-glutaminyl-tRNA(Gln) + L-glutamate + ADP + phosphate + H(+). It catalyses the reaction L-aspartyl-tRNA(Asn) + L-glutamine + ATP + H2O = L-asparaginyl-tRNA(Asn) + L-glutamate + ADP + phosphate + 2 H(+). Functionally, allows the formation of correctly charged Asn-tRNA(Asn) or Gln-tRNA(Gln) through the transamidation of misacylated Asp-tRNA(Asn) or Glu-tRNA(Gln) in organisms which lack either or both of asparaginyl-tRNA or glutaminyl-tRNA synthetases. The reaction takes place in the presence of glutamine and ATP through an activated phospho-Asp-tRNA(Asn) or phospho-Glu-tRNA(Gln). The chain is Aspartyl/glutamyl-tRNA(Asn/Gln) amidotransferase subunit B from Wolbachia sp. subsp. Drosophila simulans (strain wRi).